The chain runs to 258 residues: Phosphate import ATP-binding protein PstB (258 aa).

The region spanning Leu-5 to Lys-247 is the ABC transporter domain. Residue Gly-37–Ser-44 participates in ATP binding.

Belongs to the ABC transporter superfamily. Phosphate importer (TC 3.A.1.7) family. As to quaternary structure, the complex is composed of two ATP-binding proteins (PstB), two transmembrane proteins (PstC and PstA) and a solute-binding protein (PstS).

It is found in the cell membrane. The enzyme catalyses phosphate(out) + ATP + H2O = ADP + 2 phosphate(in) + H(+). Functionally, part of the ABC transporter complex PstSACB involved in phosphate import. Responsible for energy coupling to the transport system. The chain is Phosphate import ATP-binding protein PstB from Rhodococcus jostii (strain RHA1).